Consider the following 138-residue polypeptide: Protein PsiE homolog (138 aa).

The next 4 membrane-spanning stretches (helical) occupy residues 12–34, 56–76, 84–104, and 109–129; these read YLLQ…ALLI, YEML…ALII, HFPL…LIII, and AIST…FFIA.

The protein belongs to the PsiE family.

It is found in the cell membrane. This is Protein PsiE homolog from Bacillus subtilis (strain 168).